The following is a 143-amino-acid chain: Transcriptional regulator MraZ (143 aa).

SpoVT-AbrB domains lie at 5–47 and 76–119; these read EFRH…PMNE and ASEC…SQEK.

This sequence belongs to the MraZ family. As to quaternary structure, forms oligomers.

The protein resides in the cytoplasm. The protein localises to the nucleoid. In Natranaerobius thermophilus (strain ATCC BAA-1301 / DSM 18059 / JW/NM-WN-LF), this protein is Transcriptional regulator MraZ.